We begin with the raw amino-acid sequence, 507 residues long: MRGFFRQRRSVSPPGHPYDRTGPGEHAGPGARTGPGGRPRVLGVRGLRARGIRTGLRWKLSAAIALVGALVAIALSLVVHNAARVSMLDNARDLADDRVLIAQRNYELSGRQNFPNAQIDDPALPPELRRKIDAGRRATYVSERPDGVTDIWAAVPLKDGHVMSLHSGFTDRSADILSDLDQALVIGSIAVVLGGSALGVLIGGQLSRRLREAAAAANRVASGEPDVRVRDAIGGVVRDETDDVARAVDAMADALQQRIEAERRVTADIAHELRTPVTGLLTAAELLPPGRPTELVLDRAKAMRTLVEDVLEVARLDGASERAELQDIMLGDFVSRRVAAKDPAVEVRVIHESEVTTDPRRLERVLFNLLANAARHGRSPVEVSVEGRVIRVRDHGPGFPEDLLAEGPSRFRTGSTDRAGRGHGLGLTIAAGQARVLGARLTFRNVRPAGAPAHIPAEGAVAVLWLPEHAPTNTGSYPMLPDRSKSGASSSARDMSREASQGMSRKP.

The segment at 1-42 (MRGFFRQRRSVSPPGHPYDRTGPGEHAGPGARTGPGGRPRVL) is disordered. Over residues 25-37 (EHAGPGARTGPGG) the composition is skewed to gly residues. The next 2 membrane-spanning stretches (helical) occupy residues 60–80 (LSAA…LVVH) and 183–203 (ALVI…VLIG). The HAMP domain occupies 204–260 (GQLSRRLREAAAAANRVASGEPDVRVRDAIGGVVRDETDDVARAVDAMADALQQRIE). A Histidine kinase domain is found at 268-470 (DIAHELRTPV…VAVLWLPEHA (203 aa)). Phosphohistidine; by autocatalysis is present on histidine 271. Residues 472–507 (TNTGSYPMLPDRSKSGASSSARDMSREASQGMSRKP) are disordered. Residues 486 to 507 (SGASSSARDMSREASQGMSRKP) show a composition bias toward polar residues.

It is found in the cell membrane. It catalyses the reaction ATP + protein L-histidine = ADP + protein N-phospho-L-histidine.. In terms of biological role, member of the two-component regulatory system CseB/CseC involved in the stability of the cell envelope, through activation of transcription of RNA polymerase sigma-E factor. CseC functions as a membrane-associated protein kinase that phosphorylates CseB in response to changes in the cell envelope. The sequence is that of Sensor protein CseC (cseC) from Streptomyces coelicolor (strain ATCC BAA-471 / A3(2) / M145).